A 482-amino-acid chain; its full sequence is ADP-ribosylation factor GTPase-activating protein effector protein 1 (482 aa).

The disordered stretch occupies residues Gln-116–Thr-156. Basic residues predominate over residues Lys-118–His-127. The span at Ser-134–Asn-143 shows a compositional bias: low complexity. An Arf-GAP domain is found at Asp-170 to Glu-297. A C4-type zinc finger spans residues Cys-186–Cys-210.

It localises to the cytoplasm. GTPase-activating protein (GAP) for the ADP ribosylation factors ARF1 and ARF2. May be involved in the endocytic pathway. This chain is ADP-ribosylation factor GTPase-activating protein effector protein 1 (AGE1), found in Saccharomyces cerevisiae (strain ATCC 204508 / S288c) (Baker's yeast).